The chain runs to 236 residues: Purine nucleoside phosphorylase DeoD-type 2 (236 aa).

His5 provides a ligand contact to a purine D-ribonucleoside. Phosphate contacts are provided by residues Gly21, Arg25, Arg44, and Arg88–Thr91. A purine D-ribonucleoside is bound by residues Glu180 to Glu182 and Ser204 to Asp205. Asp205 functions as the Proton donor in the catalytic mechanism.

It belongs to the PNP/UDP phosphorylase family. In terms of assembly, homohexamer; trimer of homodimers.

The catalysed reaction is a purine D-ribonucleoside + phosphate = a purine nucleobase + alpha-D-ribose 1-phosphate. The enzyme catalyses a purine 2'-deoxy-D-ribonucleoside + phosphate = a purine nucleobase + 2-deoxy-alpha-D-ribose 1-phosphate. Catalyzes the reversible phosphorolytic breakdown of the N-glycosidic bond in the beta-(deoxy)ribonucleoside molecules, with the formation of the corresponding free purine bases and pentose-1-phosphate. The protein is Purine nucleoside phosphorylase DeoD-type 2 of Shewanella oneidensis (strain ATCC 700550 / JCM 31522 / CIP 106686 / LMG 19005 / NCIMB 14063 / MR-1).